A 314-amino-acid polypeptide reads, in one-letter code: 2-dehydro-3-deoxygluconokinase (314 aa).

Residues 28–32 (GDTLN), Tyr88, 102–104 (YWR), and Arg170 contribute to the substrate site. ATP is bound by residues 168 to 170 (NYR), 228 to 233 (KCGKNG), and 260 to 263 (SAGD). Residue Asp263 coordinates substrate. Catalysis depends on Asp263, which acts as the Proton acceptor.

It belongs to the carbohydrate kinase PfkB family.

The enzyme catalyses 2-dehydro-3-deoxy-D-gluconate + ATP = 2-dehydro-3-deoxy-6-phospho-D-gluconate + ADP + H(+). The protein operates within carbohydrate acid metabolism; 2-dehydro-3-deoxy-D-gluconate degradation; D-glyceraldehyde 3-phosphate and pyruvate from 2-dehydro-3-deoxy-D-gluconate: step 1/2. Catalyzes the phosphorylation of 2-keto-3-deoxygluconate (KDG) to produce 2-keto-3-deoxy-6-phosphogluconate (KDPG). This Haemophilus influenzae (strain ATCC 51907 / DSM 11121 / KW20 / Rd) protein is 2-dehydro-3-deoxygluconokinase (kdgK).